A 429-amino-acid chain; its full sequence is Histidinol dehydrogenase (429 aa).

NAD(+)-binding residues include tyrosine 130, glutamine 191, and asparagine 214. Substrate is bound by residues serine 237, glutamine 259, and histidine 262. Zn(2+) is bound by residues glutamine 259 and histidine 262. Residues glutamate 327 and histidine 328 each act as proton acceptor in the active site. Substrate contacts are provided by histidine 328, aspartate 361, glutamate 415, and histidine 420. Residue aspartate 361 participates in Zn(2+) binding. Histidine 420 serves as a coordination point for Zn(2+).

Belongs to the histidinol dehydrogenase family. Requires Zn(2+) as cofactor.

It carries out the reaction L-histidinol + 2 NAD(+) + H2O = L-histidine + 2 NADH + 3 H(+). The protein operates within amino-acid biosynthesis; L-histidine biosynthesis; L-histidine from 5-phospho-alpha-D-ribose 1-diphosphate: step 9/9. Its function is as follows. Catalyzes the sequential NAD-dependent oxidations of L-histidinol to L-histidinaldehyde and then to L-histidine. This is Histidinol dehydrogenase from Neisseria meningitidis serogroup A / serotype 4A (strain DSM 15465 / Z2491).